Consider the following 257-residue polypeptide: L-aspartate dehydrogenase (257 aa).

2 residues coordinate NAD(+): alanine 124 and asparagine 180. The active site involves histidine 208.

Belongs to the L-aspartate dehydrogenase family.

The enzyme catalyses L-aspartate + NADP(+) + H2O = oxaloacetate + NH4(+) + NADPH + H(+). The catalysed reaction is L-aspartate + NAD(+) + H2O = oxaloacetate + NH4(+) + NADH + H(+). The protein operates within cofactor biosynthesis; NAD(+) biosynthesis; iminoaspartate from L-aspartate (dehydrogenase route): step 1/1. In terms of biological role, specifically catalyzes the NAD or NADP-dependent dehydrogenation of L-aspartate to iminoaspartate. The sequence is that of L-aspartate dehydrogenase from Methanothermobacter thermautotrophicus (strain ATCC 29096 / DSM 1053 / JCM 10044 / NBRC 100330 / Delta H) (Methanobacterium thermoautotrophicum).